The sequence spans 348 residues: Protein RecA (348 aa).

69-76 (GPESSGKT) contributes to the ATP binding site.

Belongs to the RecA family.

The protein localises to the cytoplasm. In terms of biological role, can catalyze the hydrolysis of ATP in the presence of single-stranded DNA, the ATP-dependent uptake of single-stranded DNA by duplex DNA, and the ATP-dependent hybridization of homologous single-stranded DNAs. It interacts with LexA causing its activation and leading to its autocatalytic cleavage. In Picosynechococcus sp. (strain ATCC 27264 / PCC 7002 / PR-6) (Agmenellum quadruplicatum), this protein is Protein RecA.